Reading from the N-terminus, the 265-residue chain is Zinc import ATP-binding protein ZnuC (265 aa).

Residues I6–N221 form the ABC transporter domain. G38 to T45 is a binding site for ATP. The disordered stretch occupies residues D245 to G265.

Belongs to the ABC transporter superfamily. Zinc importer (TC 3.A.1.15.5) family. As to quaternary structure, the complex is composed of two ATP-binding proteins (ZnuC), two transmembrane proteins (ZnuB) and a solute-binding protein (ZnuA).

It localises to the cell inner membrane. The catalysed reaction is Zn(2+)(out) + ATP(in) + H2O(in) = Zn(2+)(in) + ADP(in) + phosphate(in) + H(+)(in). Part of the ABC transporter complex ZnuABC involved in zinc import. Responsible for energy coupling to the transport system. The sequence is that of Zinc import ATP-binding protein ZnuC from Pseudomonas savastanoi pv. phaseolicola (strain 1448A / Race 6) (Pseudomonas syringae pv. phaseolicola (strain 1448A / Race 6)).